Here is a 380-residue protein sequence, read N- to C-terminus: Erythronate-4-phosphate dehydrogenase (380 aa).

Residues S45 and T66 each coordinate substrate. Residues 126–127 (QV), D146, T174, 205–207 (ASR), and D231 contribute to the NAD(+) site. The active site involves R207. The active site involves E236. Catalysis depends on H253, which acts as the Proton donor. G256 contributes to the NAD(+) binding site. Y257 is a substrate binding site.

It belongs to the D-isomer specific 2-hydroxyacid dehydrogenase family. PdxB subfamily. Homodimer.

It localises to the cytoplasm. It catalyses the reaction 4-phospho-D-erythronate + NAD(+) = (R)-3-hydroxy-2-oxo-4-phosphooxybutanoate + NADH + H(+). Its pathway is cofactor biosynthesis; pyridoxine 5'-phosphate biosynthesis; pyridoxine 5'-phosphate from D-erythrose 4-phosphate: step 2/5. In terms of biological role, catalyzes the oxidation of erythronate-4-phosphate to 3-hydroxy-2-oxo-4-phosphonooxybutanoate. The polypeptide is Erythronate-4-phosphate dehydrogenase (Pseudomonas savastanoi pv. phaseolicola (strain 1448A / Race 6) (Pseudomonas syringae pv. phaseolicola (strain 1448A / Race 6))).